The chain runs to 511 residues: Anthranilate synthase component 1 (511 aa).

The disordered stretch occupies residues 1–36 (MTTHAAEAPTTDPQGAPGSQKTPDATEAEEAARATV). Positions 11–23 (TDPQGAPGSQKTP) are enriched in polar residues. Residues S84 and 292 to 294 (PYM) each bind L-tryptophan. A chorismate-binding site is contributed by 328–329 (GT). E355 provides a ligand contact to Mg(2+). Chorismate is bound by residues Y443, R463, 477-479 (GAG), and G479. Residue E492 participates in Mg(2+) binding.

Belongs to the anthranilate synthase component I family. In terms of assembly, heterotetramer consisting of two non-identical subunits: a beta subunit (TrpG) and a large alpha subunit (TrpE). It depends on Mg(2+) as a cofactor.

It carries out the reaction chorismate + L-glutamine = anthranilate + pyruvate + L-glutamate + H(+). It functions in the pathway amino-acid biosynthesis; L-tryptophan biosynthesis; L-tryptophan from chorismate: step 1/5. Feedback inhibited by tryptophan. Functionally, part of a heterotetrameric complex that catalyzes the two-step biosynthesis of anthranilate, an intermediate in the biosynthesis of L-tryptophan. In the first step, the glutamine-binding beta subunit (TrpG) of anthranilate synthase (AS) provides the glutamine amidotransferase activity which generates ammonia as a substrate that, along with chorismate, is used in the second step, catalyzed by the large alpha subunit of AS (TrpE) to produce anthranilate. In the absence of TrpG, TrpE can synthesize anthranilate directly from chorismate and high concentrations of ammonia. The protein is Anthranilate synthase component 1 (trpE) of Streptomyces coelicolor (strain ATCC BAA-471 / A3(2) / M145).